A 92-amino-acid chain; its full sequence is Putative septation protein SpoVG (92 aa).

Belongs to the SpoVG family.

In terms of biological role, could be involved in septation. The chain is Putative septation protein SpoVG from Thermoanaerobacter pseudethanolicus (strain ATCC 33223 / 39E) (Clostridium thermohydrosulfuricum).